We begin with the raw amino-acid sequence, 246 residues long: E3 ubiquitin-protein ligase LubX (246 aa).

2 consecutive U-box domains span residues 36–109 and 131–204; these read TTPT…QTNY and EIPD…RKRE.

Interacts with host CLK1. In terms of processing, ubiquitinated in the presence of host E1 ubiquitin-activating enzyme, E2 ubiquitin-conjugating enzyme (UBE2D1 or UBE2D3) and ubiquitin.

Its subcellular location is the secreted. It is found in the host cell. It carries out the reaction S-ubiquitinyl-[E2 ubiquitin-conjugating enzyme]-L-cysteine + [acceptor protein]-L-lysine = [E2 ubiquitin-conjugating enzyme]-L-cysteine + N(6)-ubiquitinyl-[acceptor protein]-L-lysine.. Its function is as follows. Effector proteins function to alter host cell physiology and promote bacterial survival in host tissues. This protein is an E3 ubiquitin ligase that interferes with host's ubiquitination pathway. Acts in conjunction with host E2 ubiquitin-conjugating enzymes UBE2D1 (UBCH5A) or UBE2D3 (UBCH5C), and mediates polyubiquitination of host kinase CLK1. The sequence is that of E3 ubiquitin-protein ligase LubX (lubX) from Legionella pneumophila subsp. pneumophila (strain Philadelphia 1 / ATCC 33152 / DSM 7513).